Here is a 308-residue protein sequence, read N- to C-terminus: Taste receptor type 2 member 41 (308 aa).

Topologically, residues 1–6 (MLSTVS) are extracellular. The chain crosses the membrane as a helical span at residues 7-27 (VFFMSIFVLLCFLGILANGFI). Topologically, residues 28–60 (VLMLSREWLWRGRLLPSDMILLSLGTSRFCQQC) are cytoplasmic. The chain crosses the membrane as a helical span at residues 61-81 (VGLVNSFYYSLHLVEYSRSLA). Over 82-90 (RQLISLHMD) the chain is Extracellular. Residues 91-111 (FLNSATFWFGTWLSVLFCIKI) traverse the membrane as a helical segment. Residues 112-128 (ANFSHPAFLWLKWRFPA) are Cytoplasmic-facing. Residues 129–149 (LVPWLLLGSILVSFIVTLMFF) traverse the membrane as a helical segment. Over 150 to 184 (WGNHTVYQAFLRRKFSGNTTFKEWNRRLEIDYFMP) the chain is Extracellular. N-linked (GlcNAc...) asparagine glycosylation is found at N152 and N167. Residues 185–205 (LKLVTTSIPCSLFLVSILLLI) traverse the membrane as a helical segment. Residues 206 to 239 (NSLRRHSQRMQHNAHSLQDPNTQAHSRALKSLIS) are Cytoplasmic-facing. The helical transmembrane segment at 240-260 (FLVLYALSYVSMVIDATVVIS) threads the bilayer. Residues 261-264 (SDNV) lie on the Extracellular side of the membrane. The chain crosses the membrane as a helical span at residues 265 to 285 (WYWPWQIILYLCMSVHPFILI). Residues 286 to 308 (TNNLKFRGTFRQLLLLARGFWVT) are Cytoplasmic-facing.

Belongs to the G-protein coupled receptor T2R family. Expressed in subsets of taste receptor cells of the tongue and palate epithelium and exclusively in gustducin-positive cells. Expressed in 15% taste bud cells in circumvallate and foliate papillae but only in 2% in fungiform papillae. Expressed in the duodenum, antrum and fundus (part of the stomach).

Its subcellular location is the membrane. Functionally, receptor that may play a role in the perception of bitterness and is gustducin-linked. May play a role in sensing the chemical composition of the gastrointestinal content. The activity of this receptor may stimulate alpha gustducin, mediate PLC-beta-2 activation and lead to the gating of TRPM5. This Rattus norvegicus (Rat) protein is Taste receptor type 2 member 41 (Tas2r41).